A 104-amino-acid polypeptide reads, in one-letter code: UPF0145 protein VNG_2432C (104 aa).

The protein belongs to the UPF0145 family.

The protein is UPF0145 protein VNG_2432C of Halobacterium salinarum (strain ATCC 700922 / JCM 11081 / NRC-1) (Halobacterium halobium).